Consider the following 149-residue polypeptide: MGNLKEILEGGWSLVEGMRVTFRRLLRPVVTVQYPREVVTLSPAFRGHIELKSFADTGTHKCIACGTCERMCPSNVIKVQGTKAQPKGAKVATHYVIDFTRCSLCGICVESCPTGTLQYSTEYELAGESRWDGVIDLMQRFEARRPQSL.

4Fe-4S ferredoxin-type domains follow at residues 51 to 82 and 93 to 122; these read LKSFADTGTHKCIACGTCERMCPSNVIKVQGT and THYVIDFTRCSLCGICVESCPTGTLQYSTE. Residues Cys-62, Cys-65, Cys-68, Cys-72, Cys-102, Cys-105, Cys-108, and Cys-112 each contribute to the [4Fe-4S] cluster site.

The protein belongs to the complex I 23 kDa subunit family. NDH-1 is composed of 14 different subunits. Subunits NuoA, H, J, K, L, M, N constitute the membrane sector of the complex. [4Fe-4S] cluster is required as a cofactor.

It localises to the cell inner membrane. The catalysed reaction is a quinone + NADH + 5 H(+)(in) = a quinol + NAD(+) + 4 H(+)(out). Functionally, NDH-1 shuttles electrons from NADH, via FMN and iron-sulfur (Fe-S) centers, to quinones in the respiratory chain. The immediate electron acceptor for the enzyme in this species is believed to be ubiquinone. Couples the redox reaction to proton translocation (for every two electrons transferred, four hydrogen ions are translocated across the cytoplasmic membrane), and thus conserves the redox energy in a proton gradient. In Syntrophobacter fumaroxidans (strain DSM 10017 / MPOB), this protein is NADH-quinone oxidoreductase subunit I 1.